A 490-amino-acid chain; its full sequence is Adenylosuccinate synthetase, chloroplastic (490 aa).

The N-terminal 45 residues, 1–45 (MSLSSLTLDSNPRFAVGGPYHRRYPPLHHPRSFVSCSAKRPAVSA), are a transit peptide targeting the chloroplast. Ser-46 carries the N-acetylserine modification. GTP contacts are provided by residues 77–83 (GDEGKGK) and 105–107 (GHT). Asp-78 serves as the catalytic Proton acceptor. Mg(2+)-binding residues include Asp-78 and Gly-105. Residues 78–81 (DEGK), 103–106 (NAGH), Thr-195, Arg-209, Gln-289, Thr-304, and Arg-368 each bind IMP. His-106 (proton donor) is an active-site residue. Position 364–370 (364–370 (TTTGRPR)) interacts with substrate. GTP-binding positions include Arg-370, 396–398 (KLD), and 479–481 (GIG).

This sequence belongs to the adenylosuccinate synthetase family. As to quaternary structure, homodimer. The cofactor is Mg(2+).

It is found in the plastid. The protein resides in the chloroplast. It catalyses the reaction IMP + L-aspartate + GTP = N(6)-(1,2-dicarboxyethyl)-AMP + GDP + phosphate + 2 H(+). It participates in purine metabolism; AMP biosynthesis via de novo pathway; AMP from IMP: step 1/2. Its function is as follows. Plays an important role in the de novo pathway and in the salvage pathway of purine nucleotide biosynthesis. Catalyzes the first committed step in the biosynthesis of AMP from IMP. The sequence is that of Adenylosuccinate synthetase, chloroplastic from Arabidopsis thaliana (Mouse-ear cress).